The primary structure comprises 294 residues: MAMSSGGSGSGVPEQEDAVLFRRGTGQSDDSDIWDDTALIKAYDKAVASFKHALKNGDICETSGKSKTTPKRKPAKKNKSQKKNTAASLQQWKVGDKCSAIWSEDGCIYPATIASIDFKRETCVVVYTGYGNREEQNLSDLLSPICEVANNIEQNAQENENESQVSTDESENSRSPGNKSDNIKPKSAPWNSFLPPPPPMPGPRLGPGKPGLKFNGPPPPPPPPPPHLLSCWLPPFPSGPPIIPPPPPICPDSLDDADALGSMLISWYMSGYHTGYYMGFRQNQKEGRCSHSLN.

The span at 1–10 (MAMSSGGSGS) shows a compositional bias: gly residues. Residues 1-32 (MAMSSGGSGSGVPEQEDAVLFRRGTGQSDDSD) are disordered. Alanine 2 is subject to N-acetylalanine. Serine 4, serine 5, and serine 8 each carry phosphoserine; by PKA. A P1 (binding site for GEMIN2) region spans residues 13-44 (PEQEDAVLFRRGTGQSDDSDIWDDTALIKAYD). Residue threonine 25 is modified to Phosphothreonine. Residues serine 28 and serine 31 each carry the phosphoserine modification. Lysine 51 is covalently cross-linked (Glycyl lysine isopeptide (Lys-Gly) (interchain with G-Cter in SUMO2)). Residues 60 to 88 (CETSGKSKTTPKRKPAKKNKSQKKNTAAS) are disordered. The span at 68-82 (TTPKRKPAKKNKSQK) shows a compositional bias: basic residues. Threonine 69 carries the phosphothreonine modification. Residue threonine 85 is modified to Phosphothreonine; by PKA. The Tudor domain occupies 91–151 (QWKVGDKCSA…LSPICEVANN (61 aa)). The interval 97-209 (KCSAIWSEDG…MPGPRLGPGK (113 aa)) is required for interaction with RPP20/POP7. Positions 156-166 (AQENENESQVS) are enriched in low complexity. The disordered stretch occupies residues 156 to 222 (AQENENESQV…KFNGPPPPPP (67 aa)). Residue serine 187 is modified to Phosphoserine; by PKA. Residues 194 to 204 (LPPPPPMPGPR) show a composition bias toward pro residues. The span at 206 to 215 (GPGKPGLKFN) shows a compositional bias: low complexity. A Glycyl lysine isopeptide (Lys-Gly) (interchain with G-Cter in SUMO2) cross-link involves residue lysine 209. The P2 (binding site for SM B) stretch occupies residues 240 to 267 (PPIIPPPPPICPDSLDDADALGSMLISW). A required for interaction with SYNCRIP region spans residues 279 to 294 (GFRQNQKEGRCSHSLN).

This sequence belongs to the SMN family. As to quaternary structure, homooligomer; may form higher order homooligomers in the dimer to octamer range. Part of the core SMN complex that contains SMN1, GEMIN2/SIP1, DDX20/GEMIN3, GEMIN4, GEMIN5, GEMIN6, GEMIN7, GEMIN8 and STRAP/UNRIP. Part of the SMN-Sm complex that contains SMN1, GEMIN2/SIP1, DDX20/GEMIN3, GEMIN4, GEMIN5, GEMIN6, GEMIN7, GEMIN8, STRAP/UNRIP and the Sm proteins SNRPB, SNRPD1, SNRPD2, SNRPD3, SNRPE, SNRPF and SNRPG. Component of an import snRNP complex composed of KPNB1, RNUT1, SMN1 and ZNF259. Interacts with DDX20, FBL, NOLA1, RNUT1, SYNCRIP and with several spliceosomal snRNP core Sm proteins, including SNRPB, SNRPD1, SNRPD2, SNRPD3, SNRPE and ILF3. Interacts with GEMIN2; the interaction is direct. Interacts with GEMIN3; the interaction is direct. Interacts with GEMIN8; the interaction is direct. Interacts with SNRPB; the interaction is direct. Interacts (via Tudor domain) with SNRPD1 (via C-terminus); the interaction is direct. Interacts with SNRPD2; the interaction is direct. Interacts (via Tudor domain) with SNRPD3 (via C-terminus); the interaction is direct. Interacts with SNRPE; the interaction is direct. Interacts with OSTF1, LSM10, LSM11 and RPP20/POP7. Interacts (via C-terminal region) with ZPR1 (via C-terminal region). Interacts (via Tudor domain) with COIL. Interacts with SETX; recruits SETX to POLR2A. Interacts with POLR2A (via the C-terminal domain (CTD)). Interacts with PRMT5. Interacts with XRN2. Interacts (via C-terminus) with FMR1 (via C-terminus); the interaction is direct and occurs in a RNA-independent manner. Interacts (via Tudor domain) with SF3B2 ('Arg-508'-methylated form). Interacts with WRAP53/TCAB1. Interacts (via Tudor domain) with ELAVL4 in an RNA-independent manner; the interaction is required for localization of ELAVL4 to RNA granules. Interacts with FRG1.

It localises to the nucleus. The protein localises to the gem. Its subcellular location is the cajal body. It is found in the cytoplasm. The protein resides in the cytoplasmic granule. It localises to the perikaryon. The protein localises to the cell projection. Its subcellular location is the neuron projection. It is found in the axon. The protein resides in the myofibril. It localises to the sarcomere. The protein localises to the z line. In terms of biological role, the SMN complex catalyzes the assembly of small nuclear ribonucleoproteins (snRNPs), the building blocks of the spliceosome, and thereby plays an important role in the splicing of cellular pre-mRNAs. Most spliceosomal snRNPs contain a common set of Sm proteins SNRPB, SNRPD1, SNRPD2, SNRPD3, SNRPE, SNRPF and SNRPG that assemble in a heptameric protein ring on the Sm site of the small nuclear RNA to form the core snRNP (Sm core). In the cytosol, the Sm proteins SNRPD1, SNRPD2, SNRPE, SNRPF and SNRPG are trapped in an inactive 6S pICln-Sm complex by the chaperone CLNS1A that controls the assembly of the core snRNP. To assemble core snRNPs, the SMN complex accepts the trapped 5Sm proteins from CLNS1A forming an intermediate. Binding of snRNA inside 5Sm ultimately triggers eviction of the SMN complex, thereby allowing binding of SNRPD3 and SNRPB to complete assembly of the core snRNP. Within the SMN complex, SMN1 acts as a structural backbone and together with GEMIN2 it gathers the Sm complex subunits. Ensures the correct splicing of U12 intron-containing genes that may be important for normal motor and proprioceptive neurons development. Also required for resolving RNA-DNA hybrids created by RNA polymerase II, that form R-loop in transcription terminal regions, an important step in proper transcription termination. May also play a role in the metabolism of small nucleolar ribonucleoprotein (snoRNPs). In Pongo abelii (Sumatran orangutan), this protein is Survival motor neuron protein (SMN1).